Consider the following 426-residue polypeptide: MLDLKRIRNNPEEIKQIMQNRGEDFDNKLIDDVVALDERRRQILVEVEQLKSKRNSESSQIGKLKKEGKDTSAIMADMKKLSDDIKAFDVELNEVDEKIKYIMLRIPNIPNPNVPDGETDEDNIEIRKWGEPTKFDFESKAHWDIGTDLDILDFERGGKIAGSRFTVYKGLGARLERAIINYFLDMHTIDHGYTEILPPYMVNRDSMTGTGQLPKFEEDAFKVENNGYFLIPTAEVPVTNMYRNEILNGDDLPIKHAAYSACFRAEAGSAGRDTRGLVRQHQFNKVELVKFVKPEQSYDELEKLTNDAEDVLKGLGLPYRVVRICKGDLGFTAALKYDIEVWMPSYNRYVEISSCSNFEDFQARRANIRYKENGKGKPEFIHTLNGSGVAIGRTVAAILENYQNEDGTVTIPEALRPYMRNLDVIK.

Residue 233–235 (TAE) coordinates L-serine. Residue 264–266 (RAE) participates in ATP binding. E287 contacts L-serine. 351–354 (EISS) contributes to the ATP binding site. Residue S387 coordinates L-serine.

This sequence belongs to the class-II aminoacyl-tRNA synthetase family. Type-1 seryl-tRNA synthetase subfamily. As to quaternary structure, homodimer. The tRNA molecule binds across the dimer.

It localises to the cytoplasm. The enzyme catalyses tRNA(Ser) + L-serine + ATP = L-seryl-tRNA(Ser) + AMP + diphosphate + H(+). It catalyses the reaction tRNA(Sec) + L-serine + ATP = L-seryl-tRNA(Sec) + AMP + diphosphate + H(+). It participates in aminoacyl-tRNA biosynthesis; selenocysteinyl-tRNA(Sec) biosynthesis; L-seryl-tRNA(Sec) from L-serine and tRNA(Sec): step 1/1. Functionally, catalyzes the attachment of serine to tRNA(Ser). Is also able to aminoacylate tRNA(Sec) with serine, to form the misacylated tRNA L-seryl-tRNA(Sec), which will be further converted into selenocysteinyl-tRNA(Sec). The protein is Serine--tRNA ligase of Clostridium novyi (strain NT).